Consider the following 251-residue polypeptide: Seminal metalloprotease 1 (251 aa).

Positions 1 to 18 (MFPQIWGVIFLFTPTVFS) are cleaved as a signal peptide. One can recognise a Peptidase M12A domain in the interval 44 to 248 (NGIVNQIYHW…RKLNKMYRCP (205 aa)). N-linked (GlcNAc...) asparagine glycosylation is found at N55 and N120. Intrachain disulfides connect C87–C247 and C111–C136. H144 is a binding site for Zn(2+). E145 is an active-site residue. Zn(2+)-binding residues include H148 and H154. N185 carries an N-linked (GlcNAc...) asparagine glycan.

Zn(2+) serves as cofactor. Undergoes cleavage in the male during mating with a cleaved product detected in the ejaculatory duct and/or bulb of males by 8-10 minutes after the start of mating. Further cleavage occurs in the mated female. May undergo cleavage in a two-step process where it is first cleaved by Sems, making it susceptible to activational cleavage which may be carried out by another protease or by autocleavage. Produced in the male accessory glands and secreted into seminal fluid. In mated females, confined to the reproductive tract and also detected in eggs laid by mated females (at protein level).

Its subcellular location is the secreted. Seminal fluid metalloprotease which is transferred to females during mating and is required for processing of two other seminal fluid proteins Acp26Aa and Acp36DE in mated females. In Drosophila melanogaster (Fruit fly), this protein is Seminal metalloprotease 1.